Here is a 75-residue protein sequence, read N- to C-terminus: Acyl carrier protein (75 aa).

The region spanning 1–75 (MALFDDVKEV…GDAIKFIENV (75 aa)) is the Carrier domain. Ser-36 is subject to O-(pantetheine 4'-phosphoryl)serine.

This sequence belongs to the acyl carrier protein (ACP) family. Post-translationally, 4'-phosphopantetheine is transferred from CoA to a specific serine of apo-ACP by AcpS. This modification is essential for activity because fatty acids are bound in thioester linkage to the sulfhydryl of the prosthetic group.

The protein localises to the cytoplasm. The protein operates within lipid metabolism; fatty acid biosynthesis. Its function is as follows. Carrier of the growing fatty acid chain in fatty acid biosynthesis. The chain is Acyl carrier protein from Sulfurovum sp. (strain NBC37-1).